We begin with the raw amino-acid sequence, 297 residues long: MENGNGEGKGEFINQNNDFFLDSMSMLSSLPPCWDPSLPPPPPPPQSLFHALAVDAPFPDQFHHPQESGGPTMGSQEGLQPQGTVSTTSAPVVRQKPRVRARRGQATDPHSIAERLRRERIAERMKSLQELVPNTNKTDKASMLDEIIEYVRFLQLQVKVLSMSRLGGAGSVGPRLNGLSAEAGGRLNALTAPCNGLNGNGNATGSSNESLRSTEQRVAKLMEEDMGSAMQYLQGKGLCLMPISLATAISSSTTHSRGSLFNPISSAVAAEDSNVTATAVAAPEASSTMDDVSASKA.

A disordered region spans residues 59–109 (PDQFHHPQESGGPTMGSQEGLQPQGTVSTTSAPVVRQKPRVRARRGQATDP). The segment covering 73 to 90 (MGSQEGLQPQGTVSTTSA) has biased composition (polar residues). The tract at residues 105-118 (QATDPHSIAERLRR) is basic motif; degenerate. The bHLH domain occupies 105-154 (QATDPHSIAERLRRERIAERMKSLQELVPNTNKTDKASMLDEIIEYVRFL). The interval 119–154 (ERIAERMKSLQELVPNTNKTDKASMLDEIIEYVRFL) is helix-loop-helix motif.

Homodimer. In terms of tissue distribution, expressed in trichomes of the root maturation zone. Detected constitutively in flowers.

Its subcellular location is the nucleus. Functionally, transcription factor that regulates the development of root hairs. Does not seem to be involved in the regulation of sperm cell development. This chain is Transcription factor LRL3, found in Arabidopsis thaliana (Mouse-ear cress).